We begin with the raw amino-acid sequence, 1755 residues long: Transposon Ty1-MR2 Gag-Pol polyprotein (1755 aa).

3 stretches are compositionally biased toward polar residues: residues 1 to 10, 48 to 60, and 127 to 152; these read MESQQLSNYP, TKAN…TPAS, and QSQF…GNTF. Disordered stretches follow at residues 1-93, 126-173, and 352-421; these read MESQ…MMTQ, PQSQ…RPPP, and GSRN…SKST. Positions 153–165 are enriched in low complexity; it reads TDSSSADSDMTST. The RNA-binding stretch occupies residues 299 to 401; sequence NNGIHINNKV…NSKSKTARAH (103 aa). Residues 402–418 show a composition bias toward low complexity; sequence NVSTSNNSPSTDNDSIS. Phosphoserine is present on S416. D461 serves as the catalytic For protease activity; shared with dimeric partner. The tract at residues 583–640 is integrase-type zinc finger-like; sequence NVHTSESTRKYPYPFIHRMLAHANAQTIRYSLKNNTITYFNESDVDWSSAIDYQCPDC. The 176-residue stretch at 660 to 835 folds into the Integrase catalytic domain; sequence NSYEPFQYLH…AGLDISTLLP (176 aa). Residues D671 and D736 each coordinate Mg(2+). Disordered stretches follow at residues 956–1087, 1092–1111, and 1130–1186; these read SKAV…ETEK, RSPS…NIVP, and DLPL…EDNE. Over residues 960-969 the composition is skewed to low complexity; that stretch reads SPTDSTPPST. Residues 1005–1015 show a composition bias toward polar residues; sequence STPQISNIEST. Residues 1038–1053 are compositionally biased toward basic and acidic residues; it reads ESSHASKSKDFRHSDS. Polar residues-rich tracts occupy residues 1054–1082 and 1101–1111; these read YSEN…QISD and PENNSSHNIVP. The short motif at 1178–1212 is the Bipartite nuclear localization signal element; sequence KKRSLEDNETEIKVSRDTWNTKNMRSLEPPRSKKR. A Reverse transcriptase Ty1/copia-type domain is found at 1338-1476; that stretch reads NNYYITQLDI…DILGLEIKYQ (139 aa). Positions 1346, 1427, 1428, 1610, 1652, and 1685 each coordinate Mg(2+). The 143-residue stretch at 1610–1752 folds into the RNase H Ty1/copia-type domain; sequence DASYGNQPYY…IKTFKLLTNK (143 aa).

In terms of assembly, the capsid protein forms a homotrimer, from which the VLPs are assembled. The protease is a homodimer, whose active site consists of two apposed aspartic acid residues. Initially, virus-like particles (VLPs) are composed of the structural unprocessed proteins Gag and Gag-Pol, and also contain the host initiator methionine tRNA (tRNA(i)-Met) which serves as a primer for minus-strand DNA synthesis, and a dimer of genomic Ty RNA. Processing of the polyproteins occurs within the particle and proceeds by an ordered pathway, called maturation. First, the protease (PR) is released by autocatalytic cleavage of the Gag-Pol polyprotein yielding capsid protein p45 and a Pol-p154 precursor protein. This cleavage is a prerequisite for subsequent processing of Pol-p154 at the remaining sites to release the mature structural and catalytic proteins. Maturation takes place prior to the RT reaction and is required to produce transposition-competent VLPs.

It is found in the cytoplasm. The protein localises to the nucleus. It carries out the reaction DNA(n) + a 2'-deoxyribonucleoside 5'-triphosphate = DNA(n+1) + diphosphate. The catalysed reaction is Endonucleolytic cleavage to 5'-phosphomonoester.. Functionally, capsid protein (CA) is the structural component of the virus-like particle (VLP), forming the shell that encapsulates the retrotransposons dimeric RNA genome. The particles are assembled from trimer-clustered units and there are holes in the capsid shells that allow for the diffusion of macromolecules. CA also has nucleocapsid-like chaperone activity, promoting primer tRNA(i)-Met annealing to the multipartite primer-binding site (PBS), dimerization of Ty1 RNA and initiation of reverse transcription. In terms of biological role, the aspartyl protease (PR) mediates the proteolytic cleavages of the Gag and Gag-Pol polyproteins after assembly of the VLP. Its function is as follows. Reverse transcriptase/ribonuclease H (RT) is a multifunctional enzyme that catalyzes the conversion of the retro-elements RNA genome into dsDNA within the VLP. The enzyme displays a DNA polymerase activity that can copy either DNA or RNA templates, and a ribonuclease H (RNase H) activity that cleaves the RNA strand of RNA-DNA heteroduplexes during plus-strand synthesis and hydrolyzes RNA primers. The conversion leads to a linear dsDNA copy of the retrotransposon that includes long terminal repeats (LTRs) at both ends. Integrase (IN) targets the VLP to the nucleus, where a subparticle preintegration complex (PIC) containing at least integrase and the newly synthesized dsDNA copy of the retrotransposon must transit the nuclear membrane. Once in the nucleus, integrase performs the integration of the dsDNA into the host genome. The chain is Transposon Ty1-MR2 Gag-Pol polyprotein (TY1B-MR2) from Saccharomyces cerevisiae (strain ATCC 204508 / S288c) (Baker's yeast).